Here is a 378-residue protein sequence, read N- to C-terminus: H repeat-associated putative transposase YhhI (378 aa).

The protein belongs to the transposase 11 family.

In Escherichia coli (strain K12), this protein is H repeat-associated putative transposase YhhI (yhhI).